The primary structure comprises 245 residues: 8-amino-3,8-dideoxy-manno-octulosonate cytidylyltransferase (245 aa).

This sequence belongs to the KdsB family.

It localises to the cytoplasm. The catalysed reaction is 8-amino-3,8-dideoxy-alpha-D-manno-octulosonate + CTP = CMP-8-amino-3,8-dideoxy-alpha-D-manno-oct-2-ulosonate + diphosphate. It participates in bacterial outer membrane biogenesis; lipopolysaccharide biosynthesis. Activates KDO8N (a required 8-carbon sugar) for incorporation into bacterial lipopolysaccharide in the Shewanella genus. This is 8-amino-3,8-dideoxy-manno-octulosonate cytidylyltransferase from Shewanella sp. (strain MR-7).